The chain runs to 383 residues: MTTTKTNLLDFDRKGLRAFFSEELGEKAFRADQIMKWMYHFGCDDFDQMNNINKKLREKLKQKCEIRAPYVSEAQHSVDGTIKWAMKVGDQDVETVYIPDGDRATLCVSSQVGCALACTFCSTAQQGFNRNLKVSEIVGQIWRAAREIGLEKETGRRPITNVVMMGMGEPLLNMKNLMPSLDIMLDDLGFGLSKRRVTVSTSGVVSGLEQMIGKVDVALAISLHAPTDKLRSEIMPINDRWNIEAFLACVREYIASSNANRGRVTVEYVLLDHINDDMDHARQLAELLKDTPAKINLIPFNPYPGSPYKKPSNSRIDRFMKTLMEYDFTVTVRRTRGDDIDAACGQLVGDVIDRTKRTQVKQQGEAIPVKLFNLDVLQQGKAE.

Residue glutamate 94 is the Proton acceptor of the active site. In terms of domain architecture, Radical SAM core spans 100–339; the sequence is DGDRATLCVS…VTVRRTRGDD (240 aa). Cysteine 107 and cysteine 344 are oxidised to a cystine. Residues cysteine 114, cysteine 118, and cysteine 121 each contribute to the [4Fe-4S] cluster site. Residues 168-169, serine 200, 222-224, and asparagine 301 contribute to the S-adenosyl-L-methionine site; these read GE and SLH. Residue cysteine 344 is the S-methylcysteine intermediate of the active site.

The protein belongs to the radical SAM superfamily. RlmN family. It depends on [4Fe-4S] cluster as a cofactor.

It is found in the cytoplasm. The enzyme catalyses adenosine(2503) in 23S rRNA + 2 reduced [2Fe-2S]-[ferredoxin] + 2 S-adenosyl-L-methionine = 2-methyladenosine(2503) in 23S rRNA + 5'-deoxyadenosine + L-methionine + 2 oxidized [2Fe-2S]-[ferredoxin] + S-adenosyl-L-homocysteine. It catalyses the reaction adenosine(37) in tRNA + 2 reduced [2Fe-2S]-[ferredoxin] + 2 S-adenosyl-L-methionine = 2-methyladenosine(37) in tRNA + 5'-deoxyadenosine + L-methionine + 2 oxidized [2Fe-2S]-[ferredoxin] + S-adenosyl-L-homocysteine. Functionally, specifically methylates position 2 of adenine 2503 in 23S rRNA and position 2 of adenine 37 in tRNAs. m2A2503 modification seems to play a crucial role in the proofreading step occurring at the peptidyl transferase center and thus would serve to optimize ribosomal fidelity. The sequence is that of Dual-specificity RNA methyltransferase RlmN from Aliivibrio salmonicida (strain LFI1238) (Vibrio salmonicida (strain LFI1238)).